Here is a 1605-residue protein sequence, read N- to C-terminus: Kinesin-like protein klp-12 (1605 aa).

The Kinesin motor domain occupies Cys-5 to Ile-358. Residue Gly-84–Thr-91 coordinates ATP. Residues Thr-91 and Ser-217 each coordinate Mg(2+). 3 disordered regions span residues Gly-548–Glu-596, Val-1085–Asn-1152, and Ser-1198–Lys-1232. A compositionally biased stretch (polar residues) spans Asn-550 to Ala-559. Residues Gln-560–Glu-596 show a composition bias toward acidic residues. The stretch at Glu-575 to Lys-730 forms a coiled coil. Over residues Val-1116–Asn-1152 the composition is skewed to polar residues. The segment covering Ser-1200–Lys-1232 has biased composition (low complexity). WD repeat units follow at residues Gly-1282–Thr-1319, Phe-1389–Arg-1427, Ala-1525–Leu-1566, and Ala-1573–Val-1605.

The protein belongs to the TRAFAC class myosin-kinesin ATPase superfamily. Kinesin family. As to quaternary structure, component of a complex at least composed of alpha tubulin and beta tubulin. Within the complex, interacts with the alpha tubulin and beta tubulin dimer.

The protein resides in the cytoplasm. It is found in the cytoskeleton. Its function is as follows. Microtubule-binding motor protein which has ATPase activity. In complex with alpha and beta tubulins, preferentially binds to the growing microtubule plus-end to stabilize it and detaches following ATP hydrolysis. Negatively regulates axonal length through inhibiting microtubule polymerization at its plus-end. This chain is Kinesin-like protein klp-12, found in Caenorhabditis elegans.